The primary structure comprises 378 residues: Mannitol-1-phosphate 5-dehydrogenase (378 aa).

NAD(+) is bound at residue serine 4 to glycine 15.

This sequence belongs to the mannitol dehydrogenase family.

The enzyme catalyses D-mannitol 1-phosphate + NAD(+) = beta-D-fructose 6-phosphate + NADH + H(+). This chain is Mannitol-1-phosphate 5-dehydrogenase, found in Streptococcus pneumoniae (strain ATCC 700669 / Spain 23F-1).